The following is a 246-amino-acid chain: 1-(5-phosphoribosyl)-5-[(5-phosphoribosylamino)methylideneamino] imidazole-4-carboxamide isomerase (246 aa).

Catalysis depends on Asp-12, which acts as the Proton acceptor. Asp-134 acts as the Proton donor in catalysis.

This sequence belongs to the HisA/HisF family.

It is found in the cytoplasm. It catalyses the reaction 1-(5-phospho-beta-D-ribosyl)-5-[(5-phospho-beta-D-ribosylamino)methylideneamino]imidazole-4-carboxamide = 5-[(5-phospho-1-deoxy-D-ribulos-1-ylimino)methylamino]-1-(5-phospho-beta-D-ribosyl)imidazole-4-carboxamide. Its pathway is amino-acid biosynthesis; L-histidine biosynthesis; L-histidine from 5-phospho-alpha-D-ribose 1-diphosphate: step 4/9. The protein is 1-(5-phosphoribosyl)-5-[(5-phosphoribosylamino)methylideneamino] imidazole-4-carboxamide isomerase of Haloarcula marismortui (strain ATCC 43049 / DSM 3752 / JCM 8966 / VKM B-1809) (Halobacterium marismortui).